The sequence spans 465 residues: UDP-N-acetylmuramoylalanine--D-glutamate ligase (465 aa).

127–133 is an ATP binding site; the sequence is GSNGKST.

Belongs to the MurCDEF family.

The protein resides in the cytoplasm. The enzyme catalyses UDP-N-acetyl-alpha-D-muramoyl-L-alanine + D-glutamate + ATP = UDP-N-acetyl-alpha-D-muramoyl-L-alanyl-D-glutamate + ADP + phosphate + H(+). It participates in cell wall biogenesis; peptidoglycan biosynthesis. Cell wall formation. Catalyzes the addition of glutamate to the nucleotide precursor UDP-N-acetylmuramoyl-L-alanine (UMA). The chain is UDP-N-acetylmuramoylalanine--D-glutamate ligase from Cereibacter sphaeroides (strain KD131 / KCTC 12085) (Rhodobacter sphaeroides).